The primary structure comprises 366 residues: Growth hormone secretagogue receptor type 1 (366 aa).

Topologically, residues 1–40 (MWNATPSEEPGFNLTLADLDWDASPGNDSLGDELLQLFPA) are extracellular. N-linked (GlcNAc...) asparagine glycosylation is found at asparagine 13 and asparagine 27. A helical membrane pass occupies residues 41-66 (PLLAGVTATCVALFVVGIAGNLLTML). Topologically, residues 67-72 (VVSRFR) are cytoplasmic. The helical transmembrane segment at 73 to 96 (ELRTTTNLYLSSMAFSDLLIFLCM) threads the bilayer. The Extracellular segment spans residues 97 to 117 (PLDLVRLWQYRPWNFGDLLCK). An intrachain disulfide couples cysteine 116 to cysteine 198. A helical transmembrane segment spans residues 118–139 (LFQFVSESCTYATVLTITALSV). The Cytoplasmic segment spans residues 140 to 162 (ERYFAICFPLRAKVVVTKGRVKL). A helical membrane pass occupies residues 163–183 (VIFVIWAVAFCSAGPIFVLVG). Residues 184–211 (VEHENGTDPWDTNECRPTEFAVRSGLLT) lie on the Extracellular side of the membrane. The helical transmembrane segment at 212-235 (VMVWVSSIFFFLPVFCLTVLYSLI) threads the bilayer. Residues 236–263 (GRKLWRRRRGDAVVGASLRDQNHKQTVK) lie on the Cytoplasmic side of the membrane. A helical membrane pass occupies residues 264-285 (MLAVVVFAFILCWLPFHVGRYL). Residues 286–302 (FSKSFEPGSLEIAQISQ) lie on the Extracellular side of the membrane. Residues 303–326 (YCNLVSFVLFYLSAAINPILYNIM) form a helical membrane-spanning segment. Topologically, residues 327 to 366 (SKKYRVAVFRLLGFEPFSQRKLSTLKDESSRAWTESSINT) are cytoplasmic.

The protein belongs to the G-protein coupled receptor 1 family. Pituitary and hypothalamus.

The protein resides in the cell membrane. Functionally, receptor for ghrelin, coupled to G-alpha-11 proteins. Stimulates growth hormone secretion. Also binds other growth hormone releasing peptides (GHRP) (e.g. Met-enkephalin and GHRP-6) as well as non-peptide, low molecular weight secretagogues (e.g. L-692,429, MK-0677, adenosine). The sequence is that of Growth hormone secretagogue receptor type 1 (GHSR) from Homo sapiens (Human).